Consider the following 408-residue polypeptide: Succinylornithine transaminase (408 aa).

At K252 the chain carries N6-(pyridoxal phosphate)lysine.

The protein belongs to the class-III pyridoxal-phosphate-dependent aminotransferase family. AstC subfamily. Pyridoxal 5'-phosphate is required as a cofactor.

The enzyme catalyses N(2)-succinyl-L-ornithine + 2-oxoglutarate = N-succinyl-L-glutamate 5-semialdehyde + L-glutamate. It participates in amino-acid degradation; L-arginine degradation via AST pathway; L-glutamate and succinate from L-arginine: step 3/5. Functionally, catalyzes the transamination of N(2)-succinylornithine and alpha-ketoglutarate into N(2)-succinylglutamate semialdehyde and glutamate. Can also act as an acetylornithine aminotransferase. This Salmonella typhimurium (strain LT2 / SGSC1412 / ATCC 700720) protein is Succinylornithine transaminase.